A 361-amino-acid chain; its full sequence is NADP-dependent alcohol dehydrogenase 7 (361 aa).

C46 is a Zn(2+) binding site. G47 and H51 together coordinate NADP(+). Residues H68, C100, C103, C106, C114, and C164 each contribute to the Zn(2+) site. Residues I189, G191, I192, S211, R212, K216, C251, S253, S256, I276, S300, and I302 each coordinate NADP(+). The residue at position 316 (S316) is a Phosphoserine. R349 provides a ligand contact to NADP(+).

The protein belongs to the zinc-containing alcohol dehydrogenase family. In terms of assembly, homodimer. The cofactor is Zn(2+).

It catalyses the reaction a primary alcohol + NADP(+) = an aldehyde + NADPH + H(+). The enzyme catalyses (E)-cinnamyl alcohol + NADP(+) = (E)-cinnamaldehyde + NADPH + H(+). The catalysed reaction is 3-methylbutanol + NADP(+) = 3-methylbutanal + NADPH + H(+). NADP-dependent alcohol dehydrogenase with a broad substrate specificity. The oxidative reactions are more than 100 times less efficient than the corresponding reductions, suggesting that the enzyme acts as an aldehyde reductase, rather than as an alcohol dehydrogenase. This Saccharomyces cerevisiae (strain ATCC 204508 / S288c) (Baker's yeast) protein is NADP-dependent alcohol dehydrogenase 7 (ADH7).